We begin with the raw amino-acid sequence, 66 residues long: Large ribosomal subunit protein bL35 (66 aa).

Belongs to the bacterial ribosomal protein bL35 family.

This Thermomicrobium roseum (strain ATCC 27502 / DSM 5159 / P-2) protein is Large ribosomal subunit protein bL35.